We begin with the raw amino-acid sequence, 75 residues long: Cytochrome c oxidase subunit 6C (75 aa).

Topologically, residues Met-1 to Gly-13 are mitochondrial matrix. A helical membrane pass occupies residues Leu-14 to Lys-54. The Mitochondrial intermembrane segment spans residues Asn-55 to Lys-75.

It belongs to the cytochrome c oxidase subunit 6c family. In terms of assembly, component of the cytochrome c oxidase (complex IV, CIV), a multisubunit enzyme composed of 14 subunits. The complex is composed of a catalytic core of 3 subunits MT-CO1, MT-CO2 and MT-CO3, encoded in the mitochondrial DNA, and 11 supernumerary subunits COX4I, COX5A, COX5B, COX6A, COX6B, COX6C, COX7A, COX7B, COX7C, COX8 and NDUFA4, which are encoded in the nuclear genome. The complex exists as a monomer or a dimer and forms supercomplexes (SCs) in the inner mitochondrial membrane with NADH-ubiquinone oxidoreductase (complex I, CI) and ubiquinol-cytochrome c oxidoreductase (cytochrome b-c1 complex, complex III, CIII), resulting in different assemblies (supercomplex SCI(1)III(2)IV(1) and megacomplex MCI(2)III(2)IV(2)).

It localises to the mitochondrion inner membrane. It participates in energy metabolism; oxidative phosphorylation. Functionally, component of the cytochrome c oxidase, the last enzyme in the mitochondrial electron transport chain which drives oxidative phosphorylation. The respiratory chain contains 3 multisubunit complexes succinate dehydrogenase (complex II, CII), ubiquinol-cytochrome c oxidoreductase (cytochrome b-c1 complex, complex III, CIII) and cytochrome c oxidase (complex IV, CIV), that cooperate to transfer electrons derived from NADH and succinate to molecular oxygen, creating an electrochemical gradient over the inner membrane that drives transmembrane transport and the ATP synthase. Cytochrome c oxidase is the component of the respiratory chain that catalyzes the reduction of oxygen to water. Electrons originating from reduced cytochrome c in the intermembrane space (IMS) are transferred via the dinuclear copper A center (CU(A)) of subunit 2 and heme A of subunit 1 to the active site in subunit 1, a binuclear center (BNC) formed by heme A3 and copper B (CU(B)). The BNC reduces molecular oxygen to 2 water molecules using 4 electrons from cytochrome c in the IMS and 4 protons from the mitochondrial matrix. The protein is Cytochrome c oxidase subunit 6C (COX6C) of Plecturocebus donacophilus (Bolivian gray titi monkey).